The chain runs to 460 residues: MAPRSRRRRHKKPPSSVAPIIMAPTTIVTPVPLTPSKPGPSIDTLGFFSLDDNVPGLSQLILQKLNMKSYEEYKLVVDGGTPVSGFGFRCPQEMFQRMEDTFRFCAHCRALPSGLSDSKVLRHCKRCRNVYYCGPECQKSDWPAHRRVCQELRLVAVDRLMEWLLVTGDFVLPSGPWPWPPEAVQDWDSWFSMKGLHLDATLDAVLVSHAVTTLWASVGRPRPDPDVLQGSLKRLLTDVLSRPLTLGLGLRALGIDVRRTGGSTVHVVGASHVETFLTRPGDYDELGYMFPGHLGLRVVMVGVDVATGFSQSTSTSPLEPGTIQLSAHRGLYHDFWEEQVETGQTHHPDLVAAFHPGFHSSPDLMEAWLPTLLLLRDYKIPTLITVYSHQELVSSLQILVELDTHITAFGSNPFMSLKPEQVYSSPNKQPVYCSAYYIMFLGSSCQLDNRQLEEKVDGGI.

Zn(2+) is bound by residues cysteine 105, cysteine 108, cysteine 124, cysteine 127, cysteine 133, cysteine 137, histidine 145, and cysteine 149. An MYND-type zinc finger spans residues 105 to 149 (CAHCRALPSGLSDSKVLRHCKRCRNVYYCGPECQKSDWPAHRRVC).

The chain is Putative protein MSS51 homolog, mitochondrial (MSS51) from Homo sapiens (Human).